A 279-amino-acid chain; its full sequence is Topoisomerase I damage affected protein 4 (279 aa).

Residues 1–32 (MNANSTTTAIGLTSPFEKLSFFPHSSNLILAH) are Extracellular-facing. The chain crosses the membrane as a helical span at residues 33-53 (LHEIIFSFVFYQLAFSVVAPF). The Cytoplasmic portion of the chain corresponds to 54–79 (LNKVVFRKHYTTIRDPLLKIDFNVHT). The TLC domain maps to 70–271 (LLKIDFNVHT…MIRIAKKLAK (202 aa)). A helical membrane pass occupies residues 80–100 (VSMIQAVVSNTVLLPTLTTPM). Topologically, residues 101–110 (HYNVVTYTDS) are extracellular. Residues 111–131 (YSSMVSSLSAGYFIWDLTMCV) form a helical membrane-spanning segment. The Cytoplasmic portion of the chain corresponds to 132-135 (RYFK). A helical transmembrane segment spans residues 136-156 (LYGLEFTGHAIGSVYVMLLSL). Over 157–162 (RPFCQP) the chain is Extracellular. A helical transmembrane segment spans residues 163 to 183 (WIGRFLIYEASTPFVNINWFI). Residues 184–192 (MQCNAKSKN) lie on the Cytoplasmic side of the membrane. The chain crosses the membrane as a helical span at residues 193–213 (SIPLWFNVVNGLLLMTVFFVV). Residues 214-238 (RICWGSIASALLFRQMWKVRDELPK) are Extracellular-facing. Residues 239–259 (FSAVTMMSLNIFMNLLNVLWF) form a helical membrane-spanning segment. At 260-279 (KKMIRIAKKLAKPAPTSKLD) the chain is on the cytoplasmic side.

The protein belongs to the TMEM56 family.

The protein resides in the membrane. The polypeptide is Topoisomerase I damage affected protein 4 (TDA4) (Saccharomyces cerevisiae (strain ATCC 204508 / S288c) (Baker's yeast)).